Here is a 288-residue protein sequence, read N- to C-terminus: Phosphatidylserine decarboxylase proenzyme (288 aa).

Catalysis depends on charge relay system; for autoendoproteolytic cleavage activity residues aspartate 92, histidine 149, and serine 254. Serine 254 (schiff-base intermediate with substrate; via pyruvic acid; for decarboxylase activity) is an active-site residue. A Pyruvic acid (Ser); by autocatalysis modification is found at serine 254.

The protein belongs to the phosphatidylserine decarboxylase family. PSD-B subfamily. Prokaryotic type I sub-subfamily. As to quaternary structure, heterodimer of a large membrane-associated beta subunit and a small pyruvoyl-containing alpha subunit. Requires pyruvate as cofactor. In terms of processing, is synthesized initially as an inactive proenzyme. Formation of the active enzyme involves a self-maturation process in which the active site pyruvoyl group is generated from an internal serine residue via an autocatalytic post-translational modification. Two non-identical subunits are generated from the proenzyme in this reaction, and the pyruvate is formed at the N-terminus of the alpha chain, which is derived from the carboxyl end of the proenzyme. The autoendoproteolytic cleavage occurs by a canonical serine protease mechanism, in which the side chain hydroxyl group of the serine supplies its oxygen atom to form the C-terminus of the beta chain, while the remainder of the serine residue undergoes an oxidative deamination to produce ammonia and the pyruvoyl prosthetic group on the alpha chain. During this reaction, the Ser that is part of the protease active site of the proenzyme becomes the pyruvoyl prosthetic group, which constitutes an essential element of the active site of the mature decarboxylase.

Its subcellular location is the cell membrane. The catalysed reaction is a 1,2-diacyl-sn-glycero-3-phospho-L-serine + H(+) = a 1,2-diacyl-sn-glycero-3-phosphoethanolamine + CO2. Its pathway is phospholipid metabolism; phosphatidylethanolamine biosynthesis; phosphatidylethanolamine from CDP-diacylglycerol: step 2/2. Its function is as follows. Catalyzes the formation of phosphatidylethanolamine (PtdEtn) from phosphatidylserine (PtdSer). The sequence is that of Phosphatidylserine decarboxylase proenzyme from Bordetella petrii (strain ATCC BAA-461 / DSM 12804 / CCUG 43448).